The sequence spans 23 residues: Protein DCL, chloroplastic (23 aa).

It localises to the plastid. The protein resides in the chloroplast. Functionally, has a function in the early stage of chloroplast development and palisade cell morphogenesis. The protein is Protein DCL, chloroplastic of Pseudotsuga menziesii (Douglas-fir).